Reading from the N-terminus, the 99-residue chain is Small ribosomal subunit protein uS14c (99 aa).

Belongs to the universal ribosomal protein uS14 family. Part of the 30S ribosomal subunit.

Its subcellular location is the plastid. The protein localises to the chloroplast. In terms of biological role, binds 16S rRNA, required for the assembly of 30S particles. The polypeptide is Small ribosomal subunit protein uS14c (Welwitschia mirabilis (Tree tumbo)).